A 314-amino-acid chain; its full sequence is Putative peptide transport system permease protein BruAb2_1031 (314 aa).

6 helical membrane passes run 12-32 (AIPVMLIVAILTFLLMKLLPG), 101-121 (LALLAFAITIPVGIIMGVVAA), 135-155 (LALLGVSVPSFWLAILAVILF), 177-197 (WLRSLILPASILALFQIGYLA), 237-257 (VSVLTVSGYIFSLLIGGSVVI), and 286-306 (MLFLGFLFVAINVLVDILYTI). Residues 95-304 (LPVTISLALL…AINVLVDILY (210 aa)) form the ABC transmembrane type-1 domain.

Belongs to the binding-protein-dependent transport system permease family. In terms of assembly, the complex is composed of two ATP-binding proteins (BruAb2_1033 and BruAb2_1034), two transmembrane proteins (BruAb2_1031 and BruAb2_1032) and a solute-binding protein (BruAb2_1030).

Its subcellular location is the cell inner membrane. In terms of biological role, probably part of an ABC transporter complex that could be involved in peptide import. Probably responsible for the translocation of the substrate across the membrane. This chain is Putative peptide transport system permease protein BruAb2_1031, found in Brucella abortus biovar 1 (strain 9-941).